A 327-amino-acid chain; its full sequence is Ribosomal RNA large subunit methyltransferase F (327 aa).

Residues 1–31 (MTHPVTPKNTTRPTPANKPAASTLHPRNPHQ) form a disordered region.

It belongs to the methyltransferase superfamily. METTL16/RlmF family.

The protein localises to the cytoplasm. It catalyses the reaction adenosine(1618) in 23S rRNA + S-adenosyl-L-methionine = N(6)-methyladenosine(1618) in 23S rRNA + S-adenosyl-L-homocysteine + H(+). Specifically methylates the adenine in position 1618 of 23S rRNA. The chain is Ribosomal RNA large subunit methyltransferase F from Psychrobacter sp. (strain PRwf-1).